A 488-amino-acid polypeptide reads, in one-letter code: UDP-N-acetylmuramoyl-L-alanyl-D-glutamate--2,6-diaminopimelate ligase (488 aa).

UDP-N-acetyl-alpha-D-muramoyl-L-alanyl-D-glutamate is bound by residues leucine 24, serine 26, and 41–43; that span reads HQV. ATP is bound at residue 113–119; it reads GTNGKTT. UDP-N-acetyl-alpha-D-muramoyl-L-alanyl-D-glutamate contacts are provided by residues asparagine 154, 155–156, serine 182, glutamine 188, and arginine 190; that span reads TT. Lysine 222 carries the N6-carboxylysine modification. Residues arginine 386, 410–413, glycine 461, and glutamate 465 each bind meso-2,6-diaminopimelate; that span reads DNPR. The short motif at 410–413 is the Meso-diaminopimelate recognition motif element; that stretch reads DNPR.

The protein belongs to the MurCDEF family. MurE subfamily. The cofactor is Mg(2+). Carboxylation is probably crucial for Mg(2+) binding and, consequently, for the gamma-phosphate positioning of ATP.

The protein localises to the cytoplasm. The enzyme catalyses UDP-N-acetyl-alpha-D-muramoyl-L-alanyl-D-glutamate + meso-2,6-diaminopimelate + ATP = UDP-N-acetyl-alpha-D-muramoyl-L-alanyl-gamma-D-glutamyl-meso-2,6-diaminopimelate + ADP + phosphate + H(+). It functions in the pathway cell wall biogenesis; peptidoglycan biosynthesis. In terms of biological role, catalyzes the addition of meso-diaminopimelic acid to the nucleotide precursor UDP-N-acetylmuramoyl-L-alanyl-D-glutamate (UMAG) in the biosynthesis of bacterial cell-wall peptidoglycan. The chain is UDP-N-acetylmuramoyl-L-alanyl-D-glutamate--2,6-diaminopimelate ligase from Haemophilus influenzae (strain 86-028NP).